The sequence spans 4001 residues: Ankyrin repeat and KH domain-containing protein mask (4001 aa).

The span at 1 to 14 (MNNDAKNHESDDLN) shows a compositional bias: basic and acidic residues. Disordered stretches follow at residues 1 to 61 (MNND…NRQL), 91 to 174 (KNEP…GGGS), and 391 to 494 (DTDT…FLLD). A compositionally biased stretch (polar residues) spans 15-30 (VRSTAYFNQQTTTNQP). The segment covering 38-61 (NNTGSGSGSNNNNNNTNQNPNRQL) has biased composition (low complexity). Over residues 94-117 (PLTTTESSGVLTNTPLPSNSRLKV) the composition is skewed to polar residues. Over residues 118-159 (NNNNNTNNTAKMSGTSSSQSSATPTPPTASSSTTTTTTTNIS) the composition is skewed to low complexity. The span at 160 to 174 (TGGGGSGSSGGGGGS) shows a compositional bias: gly residues. Composition is skewed to acidic residues over residues 408–425 (SESEEESVSEDDIPESDP) and 434–486 (VRED…EDAP). Serine 501 bears the Phosphoserine mark. 15 ANK repeats span residues 546–575 (SGFSRSLVAACTDNDVNTVKRLLCKGNVNL), 584–614 (DGESLLSMACSAGYYELAQVLLAMSAAQVED), 618–647 (KDSTPLMEAASAGHLDIVKLLLNHNADVNA), 651–680 (TGNTPLMFACAGGQVDVVKVLLKHGANVEE), 684–713 (NGHTPLMEAASAGHVEVAKVLLEHGAGINT), 718–747 (FKESALTLACYKGHLDMVRFLLQAGADQEH), 751–780 (EMHTALMEASMDGHVEVARLLLDSGAQVNM), 784–813 (SFESPLTLAACGGHVELATLLIERGANIEE), 817–846 (EGYTPLMEAAREGHEEMVALLLSKGANINA), 851–880 (TQETALTLACCGGFMEVAAFLIKEGANLEL), 881–910 (GASTPLMEASQEGHTDLVSFLLKKKANVHA), 914–943 (TGDTALTHACENGHTDAAGVLLSYGAELEH), 947–976 (GGRTPLMKACRAGHLCTVKFLIQKGANVNK), 981–1011 (NDHTALSLACAGGHQSVVELLLKNNADPFHK), and 1014–1043 (DNSTMLIEASKGGHTRVVELLFRYPNISPT). Disordered regions lie at residues 1046 to 1067 (AASANVTQAAPTSNQPGPNQMR) and 1306 to 1376 (QPGE…PTAL). A compositionally biased stretch (polar residues) spans 1367–1376 (DNNQPVPTAL). Residues serine 1389 and serine 1588 each carry the phosphoserine modification. Disordered stretches follow at residues 1583–1612 (GDQPKSPTETPPEMEETTMSSPTEADRLGS), 1646–1669 (SDLESECEDDAEGGAGADCEENTL), 1682–1779 (EDGI…SLPL), 1852–1872 (VVHQKQQHGEGDQQCEDDGSA), 2084–2108 (MAQHQAQQQQGVGEPLTEQQQQQLH), and 2225–2256 (TPAPSSGVSSTKSMPGGIAKKAIDKQSRKERR). 3 stretches are compositionally biased toward acidic residues: residues 1646–1657 (SDLESECEDDAE), 1685–1704 (IIVEEEEDDEEEDDDDEEQD), and 1716–1759 (DDED…EPDS). The span at 1760 to 1776 (DQGTGNNNNNSKSGASS) shows a compositional bias: low complexity. The segment covering 2084 to 2093 (MAQHQAQQQQ) has biased composition (low complexity). Residues 2228–2237 (PSSGVSSTKS) show a composition bias toward polar residues. 10 ANK repeats span residues 2312–2341 (NHDTALTLACAGGHEELVELLINRGANIEH), 2345–2374 (KGFTPLILAATAGHDKVVDILLKHSAELEA), 2379–2408 (TKDTPLSLACSGGRYEVVELLLSVGANKEH), 2412–2441 (SDYTPLSLAASGGYVNIIKLLLSHGAEINS), 2447–2476 (LGISPLMLAAMNGHTPAVKLLLDQGSDINA), 2481–2510 (NRNTALTLACFQGRHEVVSLLLDRRANVEH), 2514–2543 (TGLTPLMEAASGGYIEVGRVLLDKGADVNA), 2549–2578 (SRDTALTIAADKGHQKFVELLLSRNASVEV), 2582–2611 (KGNSPLWLAAHGGHLSVVELLYDHNADIDS), and 2615–2644 (RRVSCLMAAFRKGHTKIVKWMVQYVSQFPS). Residues 2674 to 2732 (AKEAQAVKANKNASILLEELDLERTREESRKAAAARRRERKKKKKMEKKEEKRRQQQGN) adopt a coiled-coil conformation. Serine 2687 bears the Phosphoserine mark. Threonine 2698 carries the post-translational modification Phosphothreonine. The disordered stretch occupies residues 2699–3033 (REESRKAAAA…TSTTTAASSV (335 aa)). The span at 2706–2719 (AAARRRERKKKKKM) shows a compositional bias: basic residues. A compositionally biased stretch (acidic residues) spans 2739-2762 (MQGDDDDASDKDDDSDKDDEDEEA). Serine 2747 and serine 2753 each carry phosphoserine. The segment covering 2793-2810 (SQSAQAAEAAANSVSTNS) has biased composition (low complexity). Residues 2828–2839 (EPTQPVITSNSV) show a composition bias toward polar residues. Residues 2868–2886 (RQLDVKKEEPALKKKEEKN) are compositionally biased toward basic and acidic residues. Residues 2906-2941 (ALPAKQQPSSSSKLQSSESASNINSSTATNTSSANT) are compositionally biased toward low complexity. The span at 2950–2960 (ASQTASATTLN) shows a compositional bias: polar residues. The segment covering 2963 to 2975 (KRTEVDGWKEVVR) has biased composition (basic and acidic residues). Residues 2995–3004 (TATSSATSVQ) show a composition bias toward polar residues. The segment covering 3012–3032 (ANSSSNSSSSLTTSTTTAASS) has biased composition (low complexity). Residues 3036 to 3100 (MTCKKVQVPV…DATKQAHMLI (65 aa)) enclose the KH domain. 3 stretches are compositionally biased toward low complexity: residues 3156–3178 (ASTTSTSSSSSASSTTPAGASYS), 3195–3227 (SGRSSTSVKSNGSSTKVSASSGSGSRSGRAGSS), and 3244–3257 (NGVIKSKSESSSKS). Disordered regions lie at residues 3156-3329 (ASTT…GQGG), 3383-3457 (KPIA…QTSQ), 3520-3636 (AVGD…PPTA), and 3744-3786 (IFPQ…GGAA). Over residues 3262-3278 (QKSSTTLGKSSTVSPGA) the composition is skewed to polar residues. Positions 3396-3416 (GSPTQVQQQHQTQQQQQQQLP) are enriched in low complexity. Residues 3417-3427 (QPAPVPGPQPQ) show a composition bias toward pro residues. Over residues 3428 to 3457 (QQPLQQQQQQQAPQQQPQQPNQQQQPQTSQ) the composition is skewed to low complexity. Positions 3539–3559 (NILSSPVGSSKASSNHSTSPP) are enriched in polar residues. Positions 3565–3577 (QQQQQQQPQSSQQ) are enriched in low complexity. At serine 3596 the chain carries Phosphoserine. The span at 3774–3786 (PPGTGARQPGGAA) shows a compositional bias: low complexity. Residues serine 3820, serine 3822, and serine 3825 each carry the phosphoserine modification. Residues 3876 to 3945 (KAQPPGLQQP…HNMQAPPNMS (70 aa)) form a disordered region. Positions 3891-3910 (SQQQQQQPLNWLKQQPQQQQ) are enriched in low complexity.

May interact with Unc-89 (via protein kinase domain 1 or 2). Expressed ubiquitously in eye imaginal disk, slightly higher expression is seen in presumptive photoreceptors. Expressed in indirect flight muscle (IFM) (at protein level).

It localises to the cytoplasm. The protein localises to the myofibril. It is found in the sarcomere. Its subcellular location is the z line. The protein resides in the m line. In terms of biological role, mediator of receptor tyrosine kinase (RTK) signaling, and may act either downstream of MAPK or transduce signaling through a parallel branch of the RTK pathway. Required for the development and organization of indirect flight muscle sarcomeres by regulating the formation of M line and H zone and the correct assembly of thick and thin filaments in the sarcomere. This chain is Ankyrin repeat and KH domain-containing protein mask, found in Drosophila melanogaster (Fruit fly).